The primary structure comprises 202 residues: Small ribosomal subunit protein uS4 (202 aa).

The segment at Leu-15 to Ser-43 is disordered. In terms of domain architecture, S4 RNA-binding spans Gly-90–Asn-152.

Belongs to the universal ribosomal protein uS4 family. In terms of assembly, part of the 30S ribosomal subunit. Contacts protein S5. The interaction surface between S4 and S5 is involved in control of translational fidelity.

In terms of biological role, one of the primary rRNA binding proteins, it binds directly to 16S rRNA where it nucleates assembly of the body of the 30S subunit. Functionally, with S5 and S12 plays an important role in translational accuracy. The protein is Small ribosomal subunit protein uS4 of Prochlorococcus marinus (strain SARG / CCMP1375 / SS120).